Consider the following 150-residue polypeptide: Protein A151R (150 aa).

Belongs to the asfivirus A151R family. Monomer. Homodimer. Interacts with protein B119L. Interacts with membrane protein E248R. Requires Zn(2+) as cofactor.

In terms of biological role, may participate in a redox cascade for the formation of disulfide bonds in viral proteins. This chain is Protein A151R, found in African swine fever virus (isolate Tick/Malawi/Lil 20-1/1983) (ASFV).